The sequence spans 107 residues: Putative ankyrin repeat protein RP714 (107 aa).

ANK repeat units follow at residues 7–36 (PPLS…DIDV), 40–69 (NGNS…TIDA), and 73–102 (ELAT…NKSA).

The chain is Putative ankyrin repeat protein RP714 from Rickettsia prowazekii (strain Madrid E).